A 375-amino-acid polypeptide reads, in one-letter code: Phytanoyl-CoA hydroxylase-interacting protein-like (375 aa).

A phosphoserine mark is found at S11, S12, and S15. Residue N22 is glycosylated (N-linked (GlcNAc...) asparagine). S24 is modified (phosphoserine). Residue N36 is glycosylated (N-linked (GlcNAc...) asparagine). The Fibronectin type-III domain maps to 51 to 160 (VPHNIKINNI…EIIEFCTADY (110 aa)).

This sequence belongs to the PHYHIP family.

Its function is as follows. May play a role in the development of the central system. The chain is Phytanoyl-CoA hydroxylase-interacting protein-like (Phyhipl) from Mus musculus (Mouse).